The chain runs to 172 residues: MIGIPFHLRPPPGRTLHSLVRTIASTKPADLSGTQDKSTRQKINFHELKHPSKVPQRPNKSTIDGQSTPTRIPVDTQTVQLLERLSLVDLDSAEAHRTLEDAIEFASQILSVDTDGVEPLNTVLERERLTLREDRVSDGKIQQDVLRNACVTEEENFVAPPGNIPLEQEPRK.

Positions 49-71 (KHPSKVPQRPNKSTIDGQSTPTR) are disordered. A compositionally biased stretch (polar residues) spans 58-71 (PNKSTIDGQSTPTR).

The protein belongs to the GatC family. In terms of assembly, subunit of the heterotrimeric GatCAB amidotransferase (AdT) complex, composed of A, B and C subunits.

The protein localises to the mitochondrion. It catalyses the reaction L-glutamyl-tRNA(Gln) + L-glutamine + ATP + H2O = L-glutaminyl-tRNA(Gln) + L-glutamate + ADP + phosphate + H(+). In terms of biological role, allows the formation of correctly charged Gln-tRNA(Gln) through the transamidation of misacylated Glu-tRNA(Gln) in the mitochondria. The reaction takes place in the presence of glutamine and ATP through an activated gamma-phospho-Glu-tRNA(Gln). In Culex quinquefasciatus (Southern house mosquito), this protein is Glutamyl-tRNA(Gln) amidotransferase subunit C-3, mitochondrial.